Here is a 232-residue protein sequence, read N- to C-terminus: Large ribosomal subunit protein uL1 (232 aa).

The protein belongs to the universal ribosomal protein uL1 family. In terms of assembly, part of the 50S ribosomal subunit.

Binds directly to 23S rRNA. The L1 stalk is quite mobile in the ribosome, and is involved in E site tRNA release. Functionally, protein L1 is also a translational repressor protein, it controls the translation of the L11 operon by binding to its mRNA. The chain is Large ribosomal subunit protein uL1 from Aliarcobacter butzleri (strain RM4018) (Arcobacter butzleri).